We begin with the raw amino-acid sequence, 224 residues long: Pyridoxine/pyridoxamine 5'-phosphate oxidase (224 aa).

Substrate-binding positions include 14–17 and Lys-76; that span reads REHY. FMN contacts are provided by residues 71–76, 86–87, Arg-92, Lys-93, and Gln-115; these read RTVLMK and YT. The substrate site is built by Tyr-133, Arg-137, and Ser-141. FMN is bound by residues 150 to 151 and Trp-196; that span reads QS. 202–204 is a binding site for substrate; the sequence is RLH. An FMN-binding site is contributed by Arg-206.

This sequence belongs to the pyridoxamine 5'-phosphate oxidase family. Homodimer. FMN is required as a cofactor.

It catalyses the reaction pyridoxamine 5'-phosphate + O2 + H2O = pyridoxal 5'-phosphate + H2O2 + NH4(+). It carries out the reaction pyridoxine 5'-phosphate + O2 = pyridoxal 5'-phosphate + H2O2. Its pathway is cofactor metabolism; pyridoxal 5'-phosphate salvage; pyridoxal 5'-phosphate from pyridoxamine 5'-phosphate: step 1/1. It participates in cofactor metabolism; pyridoxal 5'-phosphate salvage; pyridoxal 5'-phosphate from pyridoxine 5'-phosphate: step 1/1. Its function is as follows. Catalyzes the oxidation of either pyridoxine 5'-phosphate (PNP) or pyridoxamine 5'-phosphate (PMP) into pyridoxal 5'-phosphate (PLP). This Streptomyces avermitilis (strain ATCC 31267 / DSM 46492 / JCM 5070 / NBRC 14893 / NCIMB 12804 / NRRL 8165 / MA-4680) protein is Pyridoxine/pyridoxamine 5'-phosphate oxidase.